A 1773-amino-acid polypeptide reads, in one-letter code: Disco-interacting protein 2 (1773 aa).

Residues 3–110 (HTASLPGYVR…QRHSKKIDFH (108 aa)) form the DMAP1-binding domain. Phosphotyrosine occurs at positions 60 and 61. Disordered regions lie at residues 112–185 (QAAM…YHSE) and 198–319 (LKGR…PLSS). Composition is skewed to polar residues over residues 113–125 (AAMS…QSGN) and 146–165 (YQNT…NNSQ). Basic residues predominate over residues 166-175 (HRQRRTQRKV). Positions 176 to 185 (THNEKRYHSE) are enriched in basic and acidic residues. Positions 224–236 (DELDSSTDDESIP) are enriched in acidic residues. Residues 241–253 (SPDKEYNYPRDHI) show a composition bias toward basic and acidic residues. A compositionally biased stretch (polar residues) spans 272 to 297 (SMGSQQHARTDVKQNQITNQKYTAPN).

This sequence belongs to the DIP2 family. As to quaternary structure, interacts with Disco. In terms of tissue distribution, expressed in the developing nervous system. Ubiquitously expressed in the developing brain. Within the mushroom body, a higher level is detected in the core of lobes and peduncle in the late third instar larva. Detected in whole mushroom body neuron structures at 48 hours after puparium formation and during later stages.

The protein resides in the cell membrane. Functionally, required for precise axonal bifurcation in mushroom body neurons by suppressing ectopic bifurcation and regulating the guidance of sister axons. May function by regulating expression of tdp1. Acts downstream of the serine/threonine-protein kinase Bsk to modulate the direction of axon projection. May play a role in fatty acid metabolism. This is Disco-interacting protein 2 from Drosophila melanogaster (Fruit fly).